A 307-amino-acid polypeptide reads, in one-letter code: tRNA-cytidine(32) 2-sulfurtransferase (307 aa).

The PP-loop motif motif lies at 44–49 (SGGKDS). Residues cysteine 119, cysteine 122, and cysteine 210 each contribute to the [4Fe-4S] cluster site.

The protein belongs to the TtcA family. Homodimer. Mg(2+) serves as cofactor. The cofactor is [4Fe-4S] cluster.

It is found in the cytoplasm. The enzyme catalyses cytidine(32) in tRNA + S-sulfanyl-L-cysteinyl-[cysteine desulfurase] + AH2 + ATP = 2-thiocytidine(32) in tRNA + L-cysteinyl-[cysteine desulfurase] + A + AMP + diphosphate + H(+). The protein operates within tRNA modification. Functionally, catalyzes the ATP-dependent 2-thiolation of cytidine in position 32 of tRNA, to form 2-thiocytidine (s(2)C32). The sulfur atoms are provided by the cysteine/cysteine desulfurase (IscS) system. This chain is tRNA-cytidine(32) 2-sulfurtransferase, found in Aliivibrio salmonicida (strain LFI1238) (Vibrio salmonicida (strain LFI1238)).